Consider the following 194-residue polypeptide: MSLDNVVEDIRDEARARAEDIRQDGQEQADEIVAEAEADAEELLESRKADVEQQLEREREQALSSAKLEAKQARLSARRDVLQRVREQVERELAELEGDRREELTRSLLDAAAVEFEDADEVSVYGRADDEELLSSILEDYDGYEFAGERDCLGGVVVEGSNSRVRVNNTFDSVLDTVWEDNLKEVSARLFDDQ.

Belongs to the V-ATPase E subunit family. In terms of assembly, has multiple subunits with at least A(3), B(3), C, D, E, F, H, I and proteolipid K(x).

Its subcellular location is the cell membrane. In terms of biological role, component of the A-type ATP synthase that produces ATP from ADP in the presence of a proton gradient across the membrane. The chain is A-type ATP synthase subunit E from Haloferax volcanii (strain ATCC 29605 / DSM 3757 / JCM 8879 / NBRC 14742 / NCIMB 2012 / VKM B-1768 / DS2) (Halobacterium volcanii).